Consider the following 115-residue polypeptide: Phosphoribosyl-ATP pyrophosphatase (115 aa).

Belongs to the PRA-PH family.

The protein resides in the cytoplasm. It carries out the reaction 1-(5-phospho-beta-D-ribosyl)-ATP + H2O = 1-(5-phospho-beta-D-ribosyl)-5'-AMP + diphosphate + H(+). The protein operates within amino-acid biosynthesis; L-histidine biosynthesis; L-histidine from 5-phospho-alpha-D-ribose 1-diphosphate: step 2/9. The protein is Phosphoribosyl-ATP pyrophosphatase of Bordetella parapertussis (strain 12822 / ATCC BAA-587 / NCTC 13253).